The sequence spans 476 residues: Glutamate--tRNA ligase (476 aa).

The short motif at 9 to 19 is the 'HIGH' region element; it reads PSPTGTLHIGT. Positions 248-252 match the 'KMSKS' region motif; sequence KLSKR. Residue Lys-251 participates in ATP binding.

This sequence belongs to the class-I aminoacyl-tRNA synthetase family. Glutamate--tRNA ligase type 1 subfamily. Monomer.

The protein resides in the cytoplasm. The catalysed reaction is tRNA(Glu) + L-glutamate + ATP = L-glutamyl-tRNA(Glu) + AMP + diphosphate. Its function is as follows. Catalyzes the attachment of glutamate to tRNA(Glu) in a two-step reaction: glutamate is first activated by ATP to form Glu-AMP and then transferred to the acceptor end of tRNA(Glu). This chain is Glutamate--tRNA ligase, found in Synechococcus sp. (strain CC9311).